A 71-amino-acid polypeptide reads, in one-letter code: Conotoxin PnMEKL-032 (71 aa).

A signal peptide spans 1–19 (MQKLIILLLVAAVLMSTQA). Residues 20-46 (LFQEKRLKEKINFLSKEKADAEKQQKR) constitute a propeptide that is removed on maturation. Intrachain disulfides connect C48–C62, C55–C66, and C61–C70.

It belongs to the conotoxin O2 superfamily. In terms of tissue distribution, expressed by the venom duct.

Its subcellular location is the secreted. This Conus pennaceus (Feathered cone) protein is Conotoxin PnMEKL-032.